The sequence spans 391 residues: Oxytocin receptor (391 aa).

At 1–38 the chain is on the extracellular side; the sequence is MEGAFAANWSAEAVNGSAAPPGTEGNRTAGPPQRNEAL. Residues N8, N15, and N26 are each glycosylated (N-linked (GlcNAc...) asparagine). Residues 39–63 form a helical membrane-spanning segment; that stretch reads ARVEVAVLSLILFLALSGNACVLLA. The Cytoplasmic portion of the chain corresponds to 64–74; it reads LRTTRHKHSRL. The helical transmembrane segment at 75 to 97 threads the bilayer; the sequence is FFFMKHLSIADLAVAVFQVLPQL. The Extracellular portion of the chain corresponds to 98 to 113; the sequence is LWDITFRFYGPDLLCR. An intrachain disulfide couples C112 to C187. Residues 114-135 traverse the membrane as a helical segment; that stretch reads LVKYLQVVGMFASTYLLLLMSL. Residues 136-154 lie on the Cytoplasmic side of the membrane; that stretch reads DRCLAICQPLRSLRRRTDR. The helical transmembrane segment at 155 to 175 threads the bilayer; it reads LAVLATWLGCLVASAPQVHIF. Over 176 to 202 the chain is Extracellular; it reads SLREVADGVFDCWAVFIQPWGPKAYIT. The chain crosses the membrane as a helical span at residues 203–225; it reads WITLAVYIVPVIVLAACYGLISF. Topologically, residues 226 to 277 are cytoplasmic; the sequence is KIWQNLRLKTEAAAAEASAGAEGAAADCAGRAALARVSNVKLISKAKIRTVK. A helical transmembrane segment spans residues 278–296; sequence MTFIVVLAFIVCWTPFFFK. Over 297–311 the chain is Extracellular; sequence QMWSVWDADAPKEAS. Residues 312-334 traverse the membrane as a helical segment; sequence AFIIAMLLASLNSCCNPWIYMLF. At 335–391 the chain is on the cytoplasmic side; the sequence is TGHLFQDLVQRFLCCSFRRLKGSQLGETSVTKKIHSYTFVLSRHSSSQRSCSQPSTV. S370 carries the phosphoserine modification.

This sequence belongs to the G-protein coupled receptor 1 family. Vasopressin/oxytocin receptor subfamily.

The protein resides in the cell membrane. Receptor for oxytocin. The activity of this receptor is mediated by G proteins which activate a phosphatidylinositol-calcium second messenger system. This is Oxytocin receptor (OXTR) from Ovis aries (Sheep).